A 468-amino-acid polypeptide reads, in one-letter code: MVYKVFLSLCIGLALSASAALHAQKAVSGHAPIQVETPARSSGQKHVLQLVTPKLETVRIGIIGLGMRGPGAVERFSKIPGTQIVALCDVLPERVKKTQEILVKAGLPEAAAYSGSEDAWKKLCEREDIDLVYIVTDWKTHAEMGVYAMEHGKHAAIEVPAAMTLEEIWKLIDTSERTRKHCIQLENCVYDFFELTTLNMAHQGVFGEILHAEGAYIHNLEDFWPYYWNNWRLDYNRKHRGDVYATHGMGPACQLLDIHRGDRMKTIVAMDTKAVNGPAYIKNKTGEVVADFQNGDQTTSLIRTEKGKTLLIQHNVMTPRPYSRKYQAVGTDGFADKYPLEMYCLRPAQVDSDIAPDHEKLNAHGPVSEEVKKALMEKYKHPIHRELEETAKKVGGHGGMDYIMDYRLIYCLRNGLPLDMDVYDLAEWCCLAELSRISIENGSAPVAIPDFTRGNWDKVKGYRHAMAE.

The signal sequence occupies residues 1–19; sequence MVYKVFLSLCIGLALSASA. NAD(+)-binding positions include 67 to 68, Asp-89, 138 to 141, 158 to 159, and Asn-187; these read MR, WKTH, and EV. Substrate-binding positions include Tyr-216, Arg-232, 244–247, and Tyr-322; that span reads YATH. Tyr-244 is a binding site for NAD(+).

It belongs to the Gfo/Idh/MocA family. Glycosyl hydrolase 109 subfamily. The cofactor is NAD(+).

Its function is as follows. Glycosidase. The protein is Glycosyl hydrolase family 109 protein of Porphyromonas gingivalis (strain ATCC BAA-308 / W83).